Here is a 273-residue protein sequence, read N- to C-terminus: Large ribosomal subunit protein uL2 (273 aa).

Disordered regions lie at residues 28–54 and 221–273; these read KPYA…TRHI and RGTA…RRTK. Over residues 39–48 the composition is skewed to low complexity; that stretch reads KSGGRNNNGR.

The protein belongs to the universal ribosomal protein uL2 family. In terms of assembly, part of the 50S ribosomal subunit. Forms a bridge to the 30S subunit in the 70S ribosome.

Functionally, one of the primary rRNA binding proteins. Required for association of the 30S and 50S subunits to form the 70S ribosome, for tRNA binding and peptide bond formation. It has been suggested to have peptidyltransferase activity; this is somewhat controversial. Makes several contacts with the 16S rRNA in the 70S ribosome. The sequence is that of Large ribosomal subunit protein uL2 from Pectobacterium carotovorum subsp. carotovorum (strain PC1).